The following is a 249-amino-acid chain: Mannose-binding protein C (249 aa).

An N-terminal signal peptide occupies residues 1 to 20 (MSLFTSLPFLLLTAVTASCA). The region spanning 43 to 101 (GINGIPGKDGRDGAKGEKGEPGQGLRGSQGPPGKMGPQGTPGIPGIPGPIGQKGDPGEN) is the Collagen-like domain. The interval 43 to 103 (GINGIPGKDG…QKGDPGENMG (61 aa)) is disordered. Pro-48 is modified (4-hydroxyproline). Over residues 50 to 62 (KDGRDGAKGEKGE) the composition is skewed to basic and acidic residues. Pro-63, Pro-74, Pro-83, and Pro-86 each carry 4-hydroxyproline. Low complexity predominate over residues 79–95 (PQGTPGIPGIPGPIGQK). The stretch at 113–131 (RATLQSELNQIKNWLIFSL) forms a coiled coil. The 112-residue stretch at 135–246 (VGKKAFFTNG…CSASFLTVCE (112 aa)) folds into the C-type lectin domain. Intrachain disulfides connect Cys-156–Cys-245 and Cys-223–Cys-237.

In terms of assembly, oligomeric complex of 3 or more homotrimers. Interacts with MASP1 and MASP2. Interacts with MEP1A and MEP1B and may inhibit their catalytic activity. Hydroxylation on proline residues within the sequence motif, GXPG, is most likely to be 4-hydroxy as this fits the requirement for 4-hydroxylation in vertebrates.

It is found in the secreted. Calcium-dependent lectin involved in innate immune defense. Binds mannose, fucose and N-acetylglucosamine on different microorganisms and activates the lectin complement pathway. Binds to late apoptotic cells, as well as to apoptotic blebs and to necrotic cells, but not to early apoptotic cells, facilitating their uptake by macrophages. The polypeptide is Mannose-binding protein C (MBL) (Bos taurus (Bovine)).